A 127-amino-acid chain; its full sequence is Large ribosomal subunit protein bL20 (127 aa).

The protein belongs to the bacterial ribosomal protein bL20 family.

In terms of biological role, binds directly to 23S ribosomal RNA and is necessary for the in vitro assembly process of the 50S ribosomal subunit. It is not involved in the protein synthesizing functions of that subunit. This Corynebacterium aurimucosum (strain ATCC 700975 / DSM 44827 / CIP 107346 / CN-1) (Corynebacterium nigricans) protein is Large ribosomal subunit protein bL20.